An 895-amino-acid chain; its full sequence is Protein translocase subunit SecA (895 aa).

Residues Gln86, 104 to 108 (GEGKT), and Asp494 contribute to the ATP site. Composition is skewed to low complexity over residues 838–849 (AAATPPGFGAPP) and 870–882 (GDAAATDADTGNR). A disordered region spans residues 838 to 895 (AAATPPGFGAPPVRQQLQYSAPTAEGDVEVHAGDAAATDADTGNRAQRRANQRQQREV).

It belongs to the SecA family. As to quaternary structure, monomer and homodimer. Part of the essential Sec protein translocation apparatus which comprises SecA, SecYEG and auxiliary proteins SecDF. Other proteins may also be involved.

The protein localises to the cell membrane. Its subcellular location is the cytoplasm. It carries out the reaction ATP + H2O + cellular proteinSide 1 = ADP + phosphate + cellular proteinSide 2.. In terms of biological role, part of the Sec protein translocase complex. Interacts with the SecYEG preprotein conducting channel. Has a central role in coupling the hydrolysis of ATP to the transfer of proteins into and across the cell membrane, serving as an ATP-driven molecular motor driving the stepwise translocation of polypeptide chains across the membrane. The chain is Protein translocase subunit SecA from Kineococcus radiotolerans (strain ATCC BAA-149 / DSM 14245 / SRS30216).